Reading from the N-terminus, the 107-residue chain is Apolipoprotein E (107 aa).

5 repeat units span residues Ala11 to Ser32, Pro33 to Gly54, Ala55 to Gly76, Gln77 to Leu98, and Arg99 to Arg107. The interval Ala11–Arg107 is 5 X 22 AA approximate tandem repeats. Residue Met74 is modified to Methionine sulfoxide. At Ser78 the chain carries Phosphoserine. The interval His89–Arg99 is LDL and other lipoprotein receptors binding. Leu93–Arg96 lines the heparin pocket.

It belongs to the apolipoprotein A1/A4/E family. In terms of assembly, homotetramer. May interact with ABCA1; functionally associated with ABCA1 in the biogenesis of HDLs. May interact with APP/A4 amyloid-beta peptide; the interaction is extremely stable in vitro but its physiological significance is unclear. May interact with MAPT. May interact with MAP2. In the cerebrospinal fluid, interacts with secreted SORL1. Interacts with PMEL; this allows the loading of PMEL luminal fragment on ILVs to induce fibril nucleation. APOE exists as multiple glycosylated and sialylated glycoforms within cells and in plasma. The extent of glycosylation and sialylation are tissue and context specific. In terms of processing, glycated in plasma VLDL. Post-translationally, phosphorylated by FAM20C in the extracellular medium.

The protein localises to the secreted. It localises to the extracellular space. Its subcellular location is the extracellular matrix. It is found in the extracellular vesicle. The protein resides in the endosome. The protein localises to the multivesicular body. APOE is an apolipoprotein, a protein associating with lipid particles, that mainly functions in lipoprotein-mediated lipid transport between organs via the plasma and interstitial fluids. APOE is a core component of plasma lipoproteins and is involved in their production, conversion and clearance. Apolipoproteins are amphipathic molecules that interact both with lipids of the lipoprotein particle core and the aqueous environment of the plasma. As such, APOE associates with chylomicrons, chylomicron remnants, very low density lipoproteins (VLDL) and intermediate density lipoproteins (IDL) but shows a preferential binding to high-density lipoproteins (HDL). It also binds a wide range of cellular receptors including the LDL receptor/LDLR, the LDL receptor-related proteins LRP1, LRP2 and LRP8 and the very low-density lipoprotein receptor/VLDLR that mediate the cellular uptake of the APOE-containing lipoprotein particles. Finally, APOE also has a heparin-binding activity and binds heparan-sulfate proteoglycans on the surface of cells, a property that supports the capture and the receptor-mediated uptake of APOE-containing lipoproteins by cells. A main function of APOE is to mediate lipoprotein clearance through the uptake of chylomicrons, VLDLs, and HDLs by hepatocytes. APOE is also involved in the biosynthesis by the liver of VLDLs as well as their uptake by peripheral tissues ensuring the delivery of triglycerides and energy storage in muscle, heart and adipose tissues. By participating in the lipoprotein-mediated distribution of lipids among tissues, APOE plays a critical role in plasma and tissues lipid homeostasis. APOE is also involved in two steps of reverse cholesterol transport, the HDLs-mediated transport of cholesterol from peripheral tissues to the liver, and thereby plays an important role in cholesterol homeostasis. First, it is functionally associated with ABCA1 in the biogenesis of HDLs in tissues. Second, it is enriched in circulating HDLs and mediates their uptake by hepatocytes. APOE also plays an important role in lipid transport in the central nervous system, regulating neuron survival and sprouting. This Saimiri sciureus (Common squirrel monkey) protein is Apolipoprotein E (APOE).